Reading from the N-terminus, the 305-residue chain is 4-diphosphocytidyl-2-C-methyl-D-erythritol kinase (305 aa).

Residue Lys10 is part of the active site. Pro95 to Ser105 is an ATP binding site. The active site involves Asp136. The segment at Pro286 to Ser305 is disordered. Over residues Pro290–Ser305 the composition is skewed to low complexity.

The protein belongs to the GHMP kinase family. IspE subfamily.

It carries out the reaction 4-CDP-2-C-methyl-D-erythritol + ATP = 4-CDP-2-C-methyl-D-erythritol 2-phosphate + ADP + H(+). It functions in the pathway isoprenoid biosynthesis; isopentenyl diphosphate biosynthesis via DXP pathway; isopentenyl diphosphate from 1-deoxy-D-xylulose 5-phosphate: step 3/6. In terms of biological role, catalyzes the phosphorylation of the position 2 hydroxy group of 4-diphosphocytidyl-2C-methyl-D-erythritol. This Anaeromyxobacter sp. (strain Fw109-5) protein is 4-diphosphocytidyl-2-C-methyl-D-erythritol kinase.